A 456-amino-acid chain; its full sequence is Putative F-box/LRR-repeat protein At5g02700 (456 aa).

The region spanning 26 to 72 (ADFINYMPDDILHHILSFIPTDLAMRTSVLSRRWRHVWCETPCLDIT) is the F-box domain. LRR repeat units lie at residues 126-154 (VRDFTYSKTYRFPDIFYLSSSLKLLDVTL), 177-202 (FCQIPDESIHNILSGCPILESLTLDT), 206-224 (LERLDLSKSPNLRRLDINQ), 271-300 (LSPLTADGYQTMALEMLSKFHNVKRLTVGE), and 330-355 (FVRSVIPGISRLLQNSPGLKKLRPST).

In Arabidopsis thaliana (Mouse-ear cress), this protein is Putative F-box/LRR-repeat protein At5g02700.